The following is a 174-amino-acid chain: Cytidylate kinase (174 aa).

Residue 7–15 (GLPGTGTTT) coordinates ATP.

Belongs to the cytidylate kinase family. Type 2 subfamily.

It localises to the cytoplasm. The catalysed reaction is CMP + ATP = CDP + ADP. The enzyme catalyses dCMP + ATP = dCDP + ADP. The chain is Cytidylate kinase from Methanococcus vannielii (strain ATCC 35089 / DSM 1224 / JCM 13029 / OCM 148 / SB).